The chain runs to 176 residues: Small capsomere-interacting protein (176 aa).

Disordered stretches follow at residues 75 to 109 (DKRQ…ASAG) and 148 to 176 (ASAA…RKKQ). The span at 80 to 109 (ASVAGAGAHAHLGGSSATPVQQAQAAASAG) shows a compositional bias: low complexity.

It belongs to the herpesviridae small capsomere-interacting protein family. Interacts with the major capsid protein/MCP.

It is found in the virion. The protein localises to the host nucleus. Functionally, participates in the assembly of the infectious particles by decorating the outer surface of the capsid shell and thus forming a layer between the capsid and the tegument. Complexes composed of the major capsid protein and small capsomere-interacting protein/SCP assemble together in the host cytoplasm and are translocated to the nucleus, where they accumulate and participate in capsid assembly. This chain is Small capsomere-interacting protein, found in Epstein-Barr virus (strain B95-8) (HHV-4).